The following is a 535-amino-acid chain: Zinc transporter ZIP5 (535 aa).

An N-terminal signal peptide occupies residues 1–19 (MGPPVHHLLTGLCVGVALG). At 20–210 (WVGGSVPNLG…PAPPGDVLSA (191 aa)) the chain is on the extracellular side. N-linked (GlcNAc...) asparagine glycosylation is found at asparagine 49 and asparagine 158. The chain crosses the membrane as a helical span at residues 211–231 (LLHSGLAVLFLSLPAPLSLLL). Over 232 to 242 (LRLLGPRLLRP) the chain is Cytoplasmic. The helical transmembrane segment at 243-263 (VLGFLGALAVGTLCGDALLHL) threads the bilayer. The Extracellular segment spans residues 264–285 (LPHAQGGRHTGPSEQSEEDLGP). The helical transmembrane segment at 286–306 (GLSVLGGLFLLFMLENTLGLV) threads the bilayer. Residues 307–439 (RHRGLRPRCC…LLQEGLSFRK (133 aa)) lie on the Cytoplasmic side of the membrane. The tract at residues 316 to 373 (CRNKRDLGEPNPDPEDGSGMVLRPLQAASEPEVQGQRENRQSSPSLAPPGHQGHSHEH) is disordered. A Phosphoserine modification is found at serine 333. Histidine 371 carries the pros-methylhistidine modification. The helical transmembrane segment at 440–460 (LLLLSLVSGALGLGGAALGVG) threads the bilayer. At 461–465 (LSLGP) the chain is on the extracellular side. A helical membrane pass occupies residues 466–486 (VPLTPWVFGTTAGVFLYVALV). Topologically, residues 487–503 (DMLPTLLRPPEPLPVFH) are cytoplasmic. A helical membrane pass occupies residues 504-524 (VLLQGLGLLLGGSLMFTIALL). Residues 525–535 (EEQLVPTVPDG) lie on the Extracellular side of the membrane.

This sequence belongs to the ZIP transporter (TC 2.A.5) family. As to quaternary structure, homodimer. Post-translationally, N-Glycosylated. Methylated at His-371 by METTL9. Expressed in all stages of eye development and primarily in the sclera and several layers of the retina, including the inner segment, outer plexiform layer and ganglion cell layer. Expressed in pancreas, kidney and the proximal and distal small intestine as well as in the embryonic visceral yolk sac. In the proximal intestine, expression is predominant in the crypts but diminishes toward the apical regions of the villi.

The protein localises to the basolateral cell membrane. It catalyses the reaction Zn(2+)(in) = Zn(2+)(out). Its function is as follows. Uniporter that transports zinc(2+) into polarized cells of enterocytes, pancreatic acinar and endoderm cells across the basolateral membrane and participates, notably, in zinc excretion from the intestine by the uptake of zinc from the blood into the intestine. The transport mechanism is temperature- and concentration-dependent and saturable. In addition, is also a high affinity copper transporter in vitro. Also may regulate glucose-stimulated insulin secretion (GSIS) in islets primarily through the zinc-activated SIRT1-PPARGC1A axis. Could regulate the BMP/TGF-beta (bone morphogenetic protein/transforming growth factor-beta) signaling pathway and modulates extracellular matrix (ECM) proteins of the sclera. Plays a role in eye development. The sequence is that of Zinc transporter ZIP5 from Mus musculus (Mouse).